We begin with the raw amino-acid sequence, 110 residues long: Nucleotide-binding protein HI1146 homolog (110 aa).

It belongs to the RapZ-like family.

Its function is as follows. Displays ATPase and GTPase activities. This Aggregatibacter actinomycetemcomitans (Actinobacillus actinomycetemcomitans) protein is Nucleotide-binding protein HI1146 homolog.